A 432-amino-acid polypeptide reads, in one-letter code: Ornithine decarboxylase, chloroplastic (432 aa).

Lys95 carries the N6-(pyridoxal phosphate)lysine modification. Residues Ser227, Gly265, and 298–301 (EPGR) each bind pyridoxal 5'-phosphate. 341-342 (YD) provides a ligand contact to substrate. Cys377 serves as the catalytic Proton donor; shared with dimeric partner. Asp378 contacts substrate. Position 406 (Tyr406) interacts with pyridoxal 5'-phosphate.

This sequence belongs to the Orn/Lys/Arg decarboxylase class-II family. Homodimer. Only the dimer is catalytically active, as the active sites are constructed of residues from both monomers. Pyridoxal 5'-phosphate serves as cofactor.

It is found in the plastid. The protein localises to the chloroplast. The catalysed reaction is L-lysine + H(+) = cadaverine + CO2. It carries out the reaction L-ornithine + H(+) = putrescine + CO2. It participates in alkaloid biosynthesis; nicotine biosynthesis. It functions in the pathway amine and polyamine biosynthesis; putrescine biosynthesis via L-ornithine pathway; putrescine from L-ornithine: step 1/1. With respect to regulation, repressed by alpha-difluoromethylornithine (DFMO), 5,5'-dithiobis-(2-nitrobenzoic acid) (DTNB) and salicylaldehyde. In terms of biological role, involved in the biosynthesis of pyridine alkaloid natural products, leading mainly to the production of anabasine, anatabine, nicotine and nornicotine, effective deterrents against herbivores with antiparasitic and pesticide properties (neurotoxins); nornicotine serves as the precursor in the synthesis of the carcinogen compound N'-nitrosonornicotine (NNN). Catalyzes the first and rate-limiting step of polyamine biosynthesis that converts ornithine into putrescine, which is the precursor for the polyamines, spermidine and spermine. Can also use, with a lower efficiency, L-lysine as substrate to produce cadaverine. Polyamines are essential for cell proliferation and are implicated in cellular processes, ranging from DNA replication to apoptosis. The protein is Ornithine decarboxylase, chloroplastic of Nicotiana glutinosa (Tobacco).